The following is a 348-amino-acid chain: Phenylalanine--tRNA ligase alpha subunit (348 aa).

Residue E259 participates in Mg(2+) binding.

The protein belongs to the class-II aminoacyl-tRNA synthetase family. Phe-tRNA synthetase alpha subunit type 1 subfamily. As to quaternary structure, tetramer of two alpha and two beta subunits. The cofactor is Mg(2+).

It is found in the cytoplasm. The enzyme catalyses tRNA(Phe) + L-phenylalanine + ATP = L-phenylalanyl-tRNA(Phe) + AMP + diphosphate + H(+). The sequence is that of Phenylalanine--tRNA ligase alpha subunit from Lacticaseibacillus paracasei (strain ATCC 334 / BCRC 17002 / CCUG 31169 / CIP 107868 / KCTC 3260 / NRRL B-441) (Lactobacillus paracasei).